Reading from the N-terminus, the 435-residue chain is Membrane-bound ghrelin O-acyltransferase MBOAT4 (435 aa).

The Lumenal portion of the chain corresponds to 1–5; that stretch reads MDWLQ. The helical transmembrane segment at 6-26 threads the bilayer; sequence FFFLHPVSLYQGAAFPFALLF. Residues 27-40 are Cytoplasmic-facing; the sequence is NYLCITESFPTRAR. The helical transmembrane segment at 41–56 threads the bilayer; the sequence is YLFLLAGGGVLALAAM. Residues 57–59 lie on the Lumenal side of the membrane; sequence GPY. Residues 60 to 76 form a helical membrane-spanning segment; sequence ALLIFIPALCAVAMISS. Residues 77-82 lie on the Cytoplasmic side of the membrane; that stretch reads LSPQEV. A helical transmembrane segment spans residues 83 to 101; that stretch reads HGLTFFFQMGWQTLCHLGL. The Lumenal portion of the chain corresponds to 102-120; the sequence is HYKEYYLCEPPPVRFYITL. Residues 121–136 traverse the membrane as a helical segment; sequence SSLMLLTQRVTSLSLD. At 137–206 the chain is on the cytoplasmic side; it reads ISEGKVEAAW…YPSISFWALT (70 aa). Residues 207–227 traverse the membrane as a helical segment; sequence WRGLQILGLECLKVALRRVVS. The Lumenal portion of the chain corresponds to 228–240; it reads AGAGLDDCQRLEC. A helical membrane pass occupies residues 241–261; the sequence is IYIMWSTAGLFKLTYYSHWIL. The Cytoplasmic portion of the chain corresponds to 262–324; that stretch reads DDSLLHAAGF…KRLVFQRSRR (63 aa). Catalysis depends on residues N307 and H338. Residues 325–338 traverse the membrane as a helical segment; it reads WPVLQTFAFSAWWH. Topologically, residues 339 to 340 are lumenal; sequence GL. Residues 341-357 traverse the membrane as a helical segment; the sequence is HPGQVFGFLCWSVMVKA. Over 358–376 the chain is Cytoplasmic; it reads DYLIHTFANGCIRSWPLRL. Residues 377 to 397 form a helical membrane-spanning segment; the sequence is LYRSLTWAHTQIIIAYVMLAV. The Lumenal segment spans residues 398-407; sequence EGRSFSSLCR. Residues 408–428 form a helical membrane-spanning segment; it reads LCCSYNSIFPVTYCLLLFLLA. The Cytoplasmic portion of the chain corresponds to 429-435; the sequence is RRKHKCN.

This sequence belongs to the membrane-bound acyltransferase family. Monomer. Post-translationally, not glycosylated.

The protein localises to the endoplasmic reticulum membrane. It carries out the reaction octanoyl-CoA + L-seryl-[protein] = O-octanoyl-L-seryl-[protein] + CoA. The enzyme catalyses decanoyl-CoA + L-seryl-[protein] = O-decanoyl-L-seryl-[protein] + CoA. It catalyses the reaction L-seryl-[protein] + acetyl-CoA = O-acetyl-L-seryl-[protein] + CoA. The catalysed reaction is L-seryl-[protein] + butanoyl-CoA = O-butanoyl-L-seryl-[protein] + CoA. It carries out the reaction pentanoyl-CoA + L-seryl-[protein] = O-pentanoyl-L-seryl-[protein] + CoA. The enzyme catalyses hexanoyl-CoA + L-seryl-[protein] = O-hexanoyl-L-seryl-[protein] + CoA. It catalyses the reaction heptanoyl-CoA + L-seryl-[protein] = O-heptanoyl-L-seryl-[protein] + CoA. The catalysed reaction is nonanoyl-CoA + L-seryl-[protein] = O-nonanoyl-L-seryl-[protein] + CoA. It carries out the reaction L-seryl-[protein] + dodecanoyl-CoA = O-dodecanoyl-L-seryl-[protein] + CoA. The enzyme catalyses L-seryl-[protein] + tetradecanoyl-CoA = O-tetradecanoyl-L-seryl-[protein] + CoA. It catalyses the reaction a fatty acyl-CoA + L-seryl-[protein] = O-fatty acyl-L-seryl-[protein] + CoA. In terms of biological role, catalyzes ghrelin acylation at 'Ser-3' using preferentially octanoyl-CoA, hexanoyl-CoA and decanoyl-CoA as acyl-CoA donors leading to ghrelin activity. In vitro uses also acyl-CoA donors of different lengths from short-chain (C2) to long-chain fatty acids (C16) knowing that acyl-CoA donors from butanoyl-CoA (C4) to dodecanoyl-CoA (C12) are more efficient compared to longer acyl-CoA donors, such as myristoyl-CoA (C14) and palmitoyl-CoA (C16) that are not efficient. The protein is Membrane-bound ghrelin O-acyltransferase MBOAT4 of Rattus norvegicus (Rat).